The sequence spans 362 residues: sn-glycerol-3-phosphate import ATP-binding protein UgpC (362 aa).

One can recognise an ABC transporter domain in the interval 4–235 (LTLQSVKKTY…PATVFVASFI (232 aa)). An ATP-binding site is contributed by 37-44 (GPSGCGKS).

Belongs to the ABC transporter superfamily. sn-glycerol-3-phosphate importer (TC 3.A.1.1.3) family. As to quaternary structure, the complex is composed of two ATP-binding proteins (UgpC), two transmembrane proteins (UgpA and UgpE) and a solute-binding protein (UgpB).

The protein localises to the cell inner membrane. The catalysed reaction is sn-glycerol 3-phosphate(out) + ATP + H2O = sn-glycerol 3-phosphate(in) + ADP + phosphate + H(+). Part of the ABC transporter complex UgpBAEC involved in sn-glycerol-3-phosphate (G3P) import. Responsible for energy coupling to the transport system. This chain is sn-glycerol-3-phosphate import ATP-binding protein UgpC, found in Paraburkholderia xenovorans (strain LB400).